The following is a 114-amino-acid chain: Hydrogenase maturation factor HypA (114 aa).

Histidine 2 provides a ligand contact to Ni(2+). Cysteine 73, cysteine 76, cysteine 89, and cysteine 92 together coordinate Zn(2+).

The protein belongs to the HypA/HybF family.

Its function is as follows. Involved in the maturation of [NiFe] hydrogenases. Required for nickel insertion into the metal center of the hydrogenase. In Azoarcus sp. (strain BH72), this protein is Hydrogenase maturation factor HypA.